Reading from the N-terminus, the 547-residue chain is Chaperonin GroEL (547 aa).

ATP contacts are provided by residues 30-33 (TLGP), K51, 87-91 (DGTTT), G415, and D496. Residues 527–547 (ENTPDMPAMPPGGMGGMGGMY) form a disordered region. Residues 538–547 (GGMGGMGGMY) are compositionally biased toward gly residues.

This sequence belongs to the chaperonin (HSP60) family. As to quaternary structure, forms a cylinder of 14 subunits composed of two heptameric rings stacked back-to-back. Interacts with the co-chaperonin GroES.

The protein localises to the cytoplasm. The enzyme catalyses ATP + H2O + a folded polypeptide = ADP + phosphate + an unfolded polypeptide.. Functionally, together with its co-chaperonin GroES, plays an essential role in assisting protein folding. The GroEL-GroES system forms a nano-cage that allows encapsulation of the non-native substrate proteins and provides a physical environment optimized to promote and accelerate protein folding. This chain is Chaperonin GroEL, found in Chlorobium phaeovibrioides (strain DSM 265 / 1930) (Prosthecochloris vibrioformis (strain DSM 265)).